The primary structure comprises 204 residues: Somatotropin (204 aa).

The signal sequence occupies residues 1-17; sequence MDRVVLLLSVLSLGVSS. The residue at position 18 (Gln-18) is a Pyrrolidone carboxylic acid. His-36 is a binding site for Zn(2+). Residues Cys-69 and Cys-177 are joined by a disulfide bond. Zn(2+) is bound at residue Glu-186. A disulfide bridge links Cys-194 with Cys-202.

It belongs to the somatotropin/prolactin family.

It is found in the secreted. In terms of biological role, growth hormone plays an important role in growth control and is involved in the regulation of several anabolic processes. Implicated as an osmoregulatory substance important for seawater adaptation. The sequence is that of Somatotropin (gh) from Lates calcarifer (Barramundi).